The following is a 406-amino-acid chain: Nicotinate phosphoribosyltransferase (406 aa).

His226 carries the phosphohistidine; by autocatalysis modification.

It belongs to the NAPRTase family. In terms of processing, transiently phosphorylated on a His residue during the reaction cycle. Phosphorylation strongly increases the affinity for substrates and increases the rate of nicotinate D-ribonucleotide production. Dephosphorylation regenerates the low-affinity form of the enzyme, leading to product release.

The catalysed reaction is nicotinate + 5-phospho-alpha-D-ribose 1-diphosphate + ATP + H2O = nicotinate beta-D-ribonucleotide + ADP + phosphate + diphosphate. Its pathway is cofactor biosynthesis; NAD(+) biosynthesis; nicotinate D-ribonucleotide from nicotinate: step 1/1. Catalyzes the synthesis of beta-nicotinate D-ribonucleotide from nicotinate and 5-phospho-D-ribose 1-phosphate at the expense of ATP. This chain is Nicotinate phosphoribosyltransferase, found in Verminephrobacter eiseniae (strain EF01-2).